Reading from the N-terminus, the 143-residue chain is UPF0102 protein Acid345_3985 (143 aa).

Belongs to the UPF0102 family.

The protein is UPF0102 protein Acid345_3985 of Koribacter versatilis (strain Ellin345).